The sequence spans 387 residues: MSVIKMTDLDLAGKRVLVRADLNVPVKDGKVTSDARIVATLPTIKLALEKGAKLMITSHLGRPTEGEYNEEFSLLPVVNYLKDKLSCPVRLAKDYLDGVEVAAGELVVLENCRFNKGEKKNTEELAKKYAALCDVFVMDAFGTAHRAEGSTYGVAQFAPVACAGPLLAGELDALGKAMLKPERPMVAIVGGSKVSTKLTVLESLSKIADQLVVGGGIANTFIAAAGHNVGKSLCEHDLIDTAKKLAAETNIPVTTDVVVGKEFSESTPATIKSVSEVTDDDMIFDIGPDSAKALADIIMNAKTILWNGPVGVFEFDQFAKGTEIIAKAIAESPAFSIAGGGDTLAAIDKFGIADKVSYISTGGGAFLEFVEGKVLPAVAILEERAKA.

Substrate contacts are provided by residues 21–23, Arg36, 59–62, Arg113, and Arg146; these read DLN and HLGR. Residues Lys197, Glu314, and 340–343 contribute to the ATP site; that span reads GGDT.

Belongs to the phosphoglycerate kinase family. In terms of assembly, monomer.

It is found in the cytoplasm. It carries out the reaction (2R)-3-phosphoglycerate + ATP = (2R)-3-phospho-glyceroyl phosphate + ADP. Its pathway is carbohydrate degradation; glycolysis; pyruvate from D-glyceraldehyde 3-phosphate: step 2/5. The protein is Phosphoglycerate kinase of Tolumonas auensis (strain DSM 9187 / NBRC 110442 / TA 4).